We begin with the raw amino-acid sequence, 100 residues long: Omega toxin Ap2 (100 aa).

The first 22 residues, 1–22 (MNTTQVILFAVVLVLTVTVGQA), serve as a signal peptide directing secretion. The propeptide occupies 23–57 (DEDSAETSLLRKLEEAEASMFGQYLEESKNSPEQR). Cystine bridges form between cysteine 58–cysteine 74, cysteine 65–cysteine 79, and cysteine 73–cysteine 94. Residue serine 99 is modified to Serine amide.

Belongs to the neurotoxin 14 (magi-1) family. 08 (Ltx-4) subfamily. As to expression, expressed by the venom duct.

Its subcellular location is the secreted. Its function is as follows. Inhibits 31.17% of Cav2.1/CACNA1A current at 1 uM concentration. This Acanthoscurria paulensis (Brazilian giant black tarantula spider) protein is Omega toxin Ap2.